The primary structure comprises 644 residues: Transmembrane 9 superfamily member 9 (644 aa).

The signal sequence occupies residues 1–27 (MEFYRSSRRLQILGSVILLLSIHVAHS). Residues 28–281 (FYLPGVAPQD…YLLMSDNQIH (254 aa)) are Lumenal-facing. A helical membrane pass occupies residues 282 to 302 (WFSIVNSLMIVLFLSGMVAMI). Residues 303–351 (MLRTLYRDISRYNELETQEEAQEETGWKLVHGDVFRPPANSDLLCVYVG) are Cytoplasmic-facing. The helical transmembrane segment at 352–372 (TGVQCLGMVLVTMIFAMLGFL) threads the bilayer. The Lumenal segment spans residues 373-377 (SPSNR). Residues 378-398 (GGLMTAMLLLWVFMGLFAGYA) form a helical membrane-spanning segment. Residues 399 to 418 (SSRLYKMFKGTEWKRIAFRT) lie on the Cytoplasmic side of the membrane. Residues 419–439 (AFLFPAVVSAIFFVLNALIWG) traverse the membrane as a helical segment. Residues 440–451 (QKSSGAVPFGTM) are Lumenal-facing. The chain crosses the membrane as a helical span at residues 452-472 (FALIFLWFGISVPLVFVGAYL). The Cytoplasmic portion of the chain corresponds to 473 to 501 (GFKKPPLDDPVKTNKIPRQIPEQAWYMNP). Residues 502-522 (IFSILIGGILPFGAVFIELFF) traverse the membrane as a helical segment. The Lumenal portion of the chain corresponds to 523 to 534 (ILTSIWLNQFYY). The chain crosses the membrane as a helical span at residues 535 to 555 (IFGFLFLVFVILMVTCAEITI). At 556 to 573 (VLCYFQLCSEDYLWWWRS) the chain is on the cytoplasmic side. A helical transmembrane segment spans residues 574–594 (YLTSGSSAVYLFLYAAFYFFT). At 595–600 (KLQITK) the chain is on the lumenal side. The chain crosses the membrane as a helical span at residues 601 to 621 (LVSAMLYFGYMLIASYAFFVL). The Cytoplasmic segment spans residues 622–644 (TGTIGFYACLWFTRLIYSSVKID). Positions 633 to 638 (FTRLIY) match the Endoplasmic reticulum export signal motif. Positions 642–644 (KID) match the Golgi retention signal motif.

This sequence belongs to the nonaspanin (TM9SF) (TC 9.A.2) family.

It is found in the endosome membrane. It localises to the golgi apparatus membrane. This Arabidopsis thaliana (Mouse-ear cress) protein is Transmembrane 9 superfamily member 9.